The sequence spans 345 residues: Variable large protein 23 (345 aa).

Positions 1-18 are cleaved as a signal peptide; sequence MRKRISAIIMTLFMVLVS. Cys-19 carries N-palmitoyl cysteine lipidation. Cys-19 carries the S-diacylglycerol cysteine lipid modification.

The protein belongs to the variable large protein (Vlp) family. Delta subfamily.

It is found in the cell outer membrane. The Vlp and Vsp proteins are antigenically distinct proteins, only one vlp or vsp gene is transcriptionally active at any one time. Switching between these genes is a mechanism of host immune response evasion. The polypeptide is Variable large protein 23 (Borrelia hermsii).